A 240-amino-acid polypeptide reads, in one-letter code: Protein unc-119 homolog A (240 aa).

A compositionally biased stretch (gly residues) spans 1–12 (MKVKKGGGGTGP). The disordered stretch occupies residues 1-62 (MKVKKGGGGT…PLQGKQPIGP (62 aa)). Residues Ser-37, Ser-39, and Ser-41 each carry the phosphoserine; by CK2 modification. Tetradecanoate is bound at residue Tyr-131.

Belongs to the PDE6D/unc-119 family. As to quaternary structure, interacts with CABP4; in the absence of calcium. May interact with GTP-bound ARL1. Interacts with ARL2 and ARL3 (GTP-bound forms); this promotes the release of myristoylated cargo proteins. Found in a complex with ARL3, RP2 and UNC119; RP2 induces hydrolysis of GTP ARL3 in the complex, leading to the release of UNC119. Interacts with NPHP3 (when myristoylated). Interacts with CYS1 (when myristoylated). Interacts with MACIR; interaction only takes place when UNC119 is not liganded with myristoylated proteins. Interacts with ARL1 and ARL3 GTP-bound forms. Interacts with ARL2. Interacts with ARL2. Interacts with LCK; this interaction plays a crucial role in activation of LCK. Interacts with FYN. Interacts with RAB11A; in a cell cycle-dependent manner. Interacts with LYN (via SH2 and SH3 domains); leading to LYN activation. Interacts with DNM1; leading to a decrease of DNM1 GTPase activity. Found in a complex with ABL1, ABL2, CRK and UNC119; leading to the inhibition of CRK phosphorylation by ABL kinases. Interacts with CD44. Interacts with KLHL18 (via kelch repeats). Interacts with PPP3CA, PPP3CB and PPP3CC. Interacts with USP48; this interaction promotes UNC119 stability. Post-translationally, phosphorylation suppresses its interaction with KLHL18 and down-regulates its KLHL18-mediated degradation. Phosphorylated more under light conditions than dark conditions. Dephosphorylated by calcineurin.

It localises to the cytoplasm. The protein resides in the cytoskeleton. It is found in the microtubule organizing center. The protein localises to the centrosome. Its subcellular location is the spindle. It localises to the spindle pole. Involved in synaptic functions in photoreceptor cells, the signal transduction in immune cells as a Src family kinase activator, endosome recycling, the uptake of bacteria and endocytosis, protein trafficking in sensory neurons and as lipid-binding chaperone with specificity for a diverse subset of myristoylated proteins. Specifically binds the myristoyl moiety of a subset of N-terminally myristoylated proteins and is required for their localization. Binds myristoylated GNAT1 and is required for G-protein localization and trafficking in sensory neurons. Probably plays a role in trafficking proteins in photoreceptor cells. Plays important roles in mediating Src family kinase signals for the completion of cytokinesis via RAB11A. In Rattus norvegicus (Rat), this protein is Protein unc-119 homolog A (Unc119).